Consider the following 159-residue polypeptide: Thioredoxin O2, mitochondrial (159 aa).

The residue at position 40 (S40) is a Phosphoserine. The region spanning 43-159 (FAEGDRSSFV…LKSVMEQLYK (117 aa)) is the Thioredoxin domain. Active-site nucleophile residues include C83 and C86. A disulfide bridge links C83 with C86.

It belongs to the thioredoxin family. Plant O-type subfamily.

The protein resides in the mitochondrion. Thiol-disulfide oxidoreductase that may participate in various redox reactions. Possesses insulin disulfide bonds reducing activity. Reduced by thioredoxin reductases NTRA and NTRB. The polypeptide is Thioredoxin O2, mitochondrial (Arabidopsis thaliana (Mouse-ear cress)).